The following is a 474-amino-acid chain: 6-phospho-beta-galactosidase (474 aa).

D-galactose 6-phosphate-binding residues include Gln19, His116, Asn159, Glu160, and Asn297. Catalysis depends on Glu160, which acts as the Proton donor. The Nucleophile role is filled by Glu375. D-galactose 6-phosphate is bound by residues Ser433, Trp434, Lys440, and Tyr442.

This sequence belongs to the glycosyl hydrolase 1 family.

The catalysed reaction is a 6-phospho-beta-D-galactoside + H2O = D-galactose 6-phosphate + an alcohol. The protein operates within carbohydrate metabolism; lactose degradation; D-galactose 6-phosphate and beta-D-glucose from lactose 6-phosphate: step 1/1. This is 6-phospho-beta-galactosidase from Lacticaseibacillus casei (Lactobacillus casei).